A 121-amino-acid polypeptide reads, in one-letter code: Basic phospholipase A2 homolog zhaoermiatoxin (121 aa).

Intrachain disulfides connect Cys26-Cys115, Cys28-Cys44, Cys43-Cys95, Cys49-Cys121, Cys50-Cys88, Cys57-Cys81, and Cys75-Cys86.

This sequence belongs to the phospholipase A2 family. Group II subfamily. R49 sub-subfamily. As to quaternary structure, homodimer. In terms of tissue distribution, expressed by the venom gland.

Its subcellular location is the secreted. Functionally, snake venom phospholipase A2 homolog that induces myonecrosis, and edema. Has low myotoxic activity. This Protobothrops mangshanensis (Mangshan pitviper) protein is Basic phospholipase A2 homolog zhaoermiatoxin.